Here is a 65-residue protein sequence, read N- to C-terminus: Small ribosomal subunit protein bS21 (65 aa).

It belongs to the bacterial ribosomal protein bS21 family.

The polypeptide is Small ribosomal subunit protein bS21 (Acidobacterium capsulatum (strain ATCC 51196 / DSM 11244 / BCRC 80197 / JCM 7670 / NBRC 15755 / NCIMB 13165 / 161)).